Reading from the N-terminus, the 203-residue chain is Ras-related protein Rab-18 (203 aa).

Positions 20, 23, 24, 25, 26, 37, 38, 43, 69, 126, 128, and 155 each coordinate GTP. An Effector region motif is present at residues 40–48; it reads QAATIGVDF. 2 S-geranylgeranyl cysteine lipidation sites follow: C201 and C203. Residue C203 is modified to Cysteine methyl ester.

Belongs to the small GTPase superfamily. Rab family.

It carries out the reaction GTP + H2O = GDP + phosphate + H(+). The small GTPases Rab are key regulators of intracellular membrane trafficking, from the formation of transport vesicles to their fusion with membranes. Rabs cycle between an inactive GDP-bound form and an active GTP-bound form that is able to recruit to membranes different sets of downstream effectors directly responsible for vesicle formation, movement, tethering and fusion. Plays a role in apical endocytosis/recycling. May be implicated in transport between the plasma membrane and early endosomes. Plays a role in the shedding of pathogen spores from intestinal cells. The chain is Ras-related protein Rab-18 (rab-18) from Caenorhabditis elegans.